A 254-amino-acid polypeptide reads, in one-letter code: MKKQVFASKKVGVLPARWGSARFTGKPLASILGKSLIRRTYENINQSIALDKVIVATDDQRIMDHVLDFGGDCVLTSPECANGTERTAETISRYFPEAEIIVNIQGDEPCLQHTVVDALVRKLEEFPEIQIVTPVAKTTDSHEILTNQKVKCVFDKNGKALYFSRSPIPHILKKETPIYLHIGVYAFRRNALFNYIESSPTPLSQAEDLEQLRILEHGGSIHVCVVEAKSPSVDYPEDINKVEKYLTCHSSASF.

It belongs to the KdsB family.

It is found in the cytoplasm. The catalysed reaction is 3-deoxy-alpha-D-manno-oct-2-ulosonate + CTP = CMP-3-deoxy-beta-D-manno-octulosonate + diphosphate. The protein operates within nucleotide-sugar biosynthesis; CMP-3-deoxy-D-manno-octulosonate biosynthesis; CMP-3-deoxy-D-manno-octulosonate from 3-deoxy-D-manno-octulosonate and CTP: step 1/1. It participates in bacterial outer membrane biogenesis; lipopolysaccharide biosynthesis. Activates KDO (a required 8-carbon sugar) for incorporation into bacterial lipopolysaccharide in Gram-negative bacteria. The chain is 3-deoxy-manno-octulosonate cytidylyltransferase from Chlamydia caviae (strain ATCC VR-813 / DSM 19441 / 03DC25 / GPIC) (Chlamydophila caviae).